A 225-amino-acid polypeptide reads, in one-letter code: Small ribosomal subunit protein L51-b (225 aa).

Residues 1-84 (MKFPDLLRCS…QCAFISSDRF (84 aa)) constitute a mitochondrion transit peptide.

The protein belongs to the bacterial ribosomal protein bS1 family. In terms of assembly, component of the mitochondrial small ribosomal subunit (mt-SSU). Mature yeast 74S mitochondrial ribosomes consist of a small (37S) and a large (54S) subunit. The 37S small subunit contains a 15S ribosomal RNA (15S mt-rRNA) and at least 32 different proteins. The 54S large subunit contains a 21S rRNA (21S mt-rRNA) and at least 45 different proteins. This subunit is mutually exclusive with mrp51/small ribosomal subunit protein bS1m.

The protein localises to the mitochondrion. Component of the mitochondrial ribosome (mitoribosome), a dedicated translation machinery responsible for the synthesis of mitochondrial genome-encoded proteins, including at least some of the essential transmembrane subunits of the mitochondrial respiratory chain. The mitoribosomes are attached to the mitochondrial inner membrane and translation products are cotranslationally integrated into the membrane. Functionally interacts with the 5'-UTR of mitochondrial mRNAs. Specifically plays a role in the translation of cob1/cytochrome b and cox3. Has a role in meiosis. This is Small ribosomal subunit protein L51-b from Schizosaccharomyces pombe (strain 972 / ATCC 24843) (Fission yeast).